Consider the following 310-residue polypeptide: D-alanine--D-alanine ligase (310 aa).

Residues 105-301 enclose the ATP-grasp domain; that stretch reads KQAFVSAGIL…FEELVERIIL (197 aa). Position 133-186 (133-186) interacts with ATP; sequence SFGLPLVVKPVQEGSSVGISIVKEESQLAAAVKLAFRHDDEILVEQFIKGQEVQ. The Mg(2+) site is built by Asp-254, Glu-267, and Asn-269.

It belongs to the D-alanine--D-alanine ligase family. The cofactor is Mg(2+). Mn(2+) is required as a cofactor.

The protein resides in the cytoplasm. It carries out the reaction 2 D-alanine + ATP = D-alanyl-D-alanine + ADP + phosphate + H(+). The protein operates within cell wall biogenesis; peptidoglycan biosynthesis. In terms of biological role, cell wall formation. The chain is D-alanine--D-alanine ligase from Pelobacter propionicus (strain DSM 2379 / NBRC 103807 / OttBd1).